A 78-amino-acid chain; its full sequence is Large ribosomal subunit protein bL28 (78 aa).

The interval 1–24 is disordered; sequence MSKVCQVTGKRPASGNNVSHAHNK.

Belongs to the bacterial ribosomal protein bL28 family.

This is Large ribosomal subunit protein bL28 from Nitrosococcus oceani (strain ATCC 19707 / BCRC 17464 / JCM 30415 / NCIMB 11848 / C-107).